A 473-amino-acid chain; its full sequence is Photosystem II CP43 reaction center protein (473 aa).

Residues 1–14 constitute a propeptide that is removed on maturation; it reads MKTLYSLRRSYPVE. T15 is subject to N-acetylthreonine. T15 is subject to Phosphothreonine. The next 5 helical transmembrane spans lie at 69 to 93, 134 to 155, 178 to 200, 255 to 275, and 291 to 312; these read LFEV…PHLA, LIGP…KDRN, KALY…RKIT, KPFA…LSYS, and WFNN…ASQA. Residue E367 participates in [CaMn4O5] cluster binding. Residues 447 to 471 traverse the membrane as a helical segment; sequence RARAAAAGFEKGIDRDFEPVLSMTP.

It belongs to the PsbB/PsbC family. PsbC subfamily. As to quaternary structure, PSII is composed of 1 copy each of membrane proteins PsbA, PsbB, PsbC, PsbD, PsbE, PsbF, PsbH, PsbI, PsbJ, PsbK, PsbL, PsbM, PsbT, PsbX, PsbY, PsbZ, Psb30/Ycf12, at least 3 peripheral proteins of the oxygen-evolving complex and a large number of cofactors. It forms dimeric complexes. Binds multiple chlorophylls and provides some of the ligands for the Ca-4Mn-5O cluster of the oxygen-evolving complex. It may also provide a ligand for a Cl- that is required for oxygen evolution. PSII binds additional chlorophylls, carotenoids and specific lipids. is required as a cofactor.

It is found in the plastid. The protein localises to the chloroplast thylakoid membrane. Its function is as follows. One of the components of the core complex of photosystem II (PSII). It binds chlorophyll and helps catalyze the primary light-induced photochemical processes of PSII. PSII is a light-driven water:plastoquinone oxidoreductase, using light energy to abstract electrons from H(2)O, generating O(2) and a proton gradient subsequently used for ATP formation. In Pinus koraiensis (Korean pine), this protein is Photosystem II CP43 reaction center protein.